The primary structure comprises 295 residues: Protoheme IX farnesyltransferase (295 aa).

The next 9 membrane-spanning stretches (helical) occupy residues 9-29 (ITKP…FFLA), 36-56 (FGVF…GCVF), 80-100 (LVSL…GVGL), 108-128 (LAAL…SLYL), 135-155 (GTLV…CAVS), 163-183 (LTLL…IAIF), 209-229 (IMLY…GGYA), 230-250 (GLNY…MAWK), and 265-285 (FVFS…DFQV).

This sequence belongs to the UbiA prenyltransferase family. Protoheme IX farnesyltransferase subfamily.

The protein resides in the cell inner membrane. The catalysed reaction is heme b + (2E,6E)-farnesyl diphosphate + H2O = Fe(II)-heme o + diphosphate. Its pathway is porphyrin-containing compound metabolism; heme O biosynthesis; heme O from protoheme: step 1/1. Functionally, converts heme B (protoheme IX) to heme O by substitution of the vinyl group on carbon 2 of heme B porphyrin ring with a hydroxyethyl farnesyl side group. The sequence is that of Protoheme IX farnesyltransferase from Pseudomonas syringae pv. syringae (strain B728a).